A 443-amino-acid polypeptide reads, in one-letter code: D-inositol 3-phosphate glycosyltransferase (443 aa).

Residue H26 coordinates 1D-myo-inositol 3-phosphate. UDP-N-acetyl-alpha-D-glucosamine-binding positions include 32-33 (QP) and G40. Residues 37 to 42 (DAGGMN), K95, Y128, T152, and R172 each bind 1D-myo-inositol 3-phosphate. Residues R246, K251, and Q304 each coordinate UDP-N-acetyl-alpha-D-glucosamine. Residues Y313, R314, and A316 each coordinate Mg(2+). Positions 326 and 334 each coordinate UDP-N-acetyl-alpha-D-glucosamine. A Mg(2+)-binding site is contributed by T340.

Belongs to the glycosyltransferase group 1 family. MshA subfamily. As to quaternary structure, homodimer.

The enzyme catalyses 1D-myo-inositol 3-phosphate + UDP-N-acetyl-alpha-D-glucosamine = 1D-myo-inositol 2-acetamido-2-deoxy-alpha-D-glucopyranoside 3-phosphate + UDP + H(+). Its function is as follows. Catalyzes the transfer of a N-acetyl-glucosamine moiety to 1D-myo-inositol 3-phosphate to produce 1D-myo-inositol 2-acetamido-2-deoxy-glucopyranoside 3-phosphate in the mycothiol biosynthesis pathway. The sequence is that of D-inositol 3-phosphate glycosyltransferase from Mycobacteroides abscessus (strain ATCC 19977 / DSM 44196 / CCUG 20993 / CIP 104536 / JCM 13569 / NCTC 13031 / TMC 1543 / L948) (Mycobacterium abscessus).